Here is a 384-residue protein sequence, read N- to C-terminus: Lipid-A-disaccharide synthase (384 aa).

Belongs to the LpxB family.

It carries out the reaction a lipid X + a UDP-2-N,3-O-bis[(3R)-3-hydroxyacyl]-alpha-D-glucosamine = a lipid A disaccharide + UDP + H(+). Its pathway is bacterial outer membrane biogenesis; LPS lipid A biosynthesis. Condensation of UDP-2,3-diacylglucosamine and 2,3-diacylglucosamine-1-phosphate to form lipid A disaccharide, a precursor of lipid A, a phosphorylated glycolipid that anchors the lipopolysaccharide to the outer membrane of the cell. This is Lipid-A-disaccharide synthase from Cellvibrio japonicus (strain Ueda107) (Pseudomonas fluorescens subsp. cellulosa).